Here is a 157-residue protein sequence, read N- to C-terminus: Large ribosomal subunit protein uL15 (157 aa).

The protein belongs to the universal ribosomal protein uL15 family. Part of the 50S ribosomal subunit.

Functionally, binds to the 23S rRNA. In Ehrlichia ruminantium (strain Gardel), this protein is Large ribosomal subunit protein uL15.